The chain runs to 202 residues: Syndecan-4 (202 aa).

Positions 1 to 23 are cleaved as a signal peptide; the sequence is MAPVCLFAPLLLLLLGGFPVAPG. Residues 24–149 are Extracellular-facing; the sequence is ESIRETEVID…QGSNIFERTE (126 aa). Disordered regions lie at residues 42–76 and 89–138; these read YFSG…TEEP and LDNH…MSST. S44 carries an O-linked (Xyl...) (glycosaminoglycan) serine glycan. Over residues 48 to 62 the composition is skewed to acidic residues; that stretch reads PDDEDAGGLEQDSDF. O-linked (Xyl...) (glycosaminoglycan) serine glycans are attached at residues S65 and S67. A compositionally biased stretch (basic and acidic residues) spans 105–121; that stretch reads SEPKELEENEVIPKRVP. The helical transmembrane segment at 150-174 threads the bilayer; it reads VLAALIVGGVVGILFAVFLILLLVY. At 175 to 202 the chain is on the cytoplasmic side; that stretch reads RMKKKDEGSYDLGKKPIYKKAPTNEFYA.

Belongs to the syndecan proteoglycan family. As to quaternary structure, homodimer. Interacts with CDCP1 and SDCBP. Interacts (via its cytoplasmic domain) with GIPC (via its PDZ domain). Interacts (via its cytoplasmic domain) with NUDT16L1. Interacts with DNM2; this interaction is markedly enhanced at focal ahesion site upon induction of focal adhesions and stress-fiber formation. Post-translationally, shedding is enhanced by a number of factors such as heparanase, thrombin or EGF. Also by stress and wound healing. PMA-mediated shedding is inhibited by TIMP3. In terms of processing, O-glycosylated; contains both chondroitin sulfate and heparan sulfate. Ser-44, Ser-65 and Ser-67 can all be modified by either chondroitin sulfate or heparan sulfate, and the protein exists in forms that contain only chondroitin sulfate, only heparan sulfate and both chondroitin sulfate and heparan sulfate.

The protein resides in the membrane. The protein localises to the secreted. Its function is as follows. Cell surface proteoglycan which regulates exosome biogenesis in concert with SDCBP and PDCD6IP. The polypeptide is Syndecan-4 (Rattus norvegicus (Rat)).